The chain runs to 161 residues: Endoribonuclease YbeY (161 aa).

Zn(2+) contacts are provided by histidine 121, histidine 125, and histidine 131.

It belongs to the endoribonuclease YbeY family. It depends on Zn(2+) as a cofactor.

It is found in the cytoplasm. In terms of biological role, single strand-specific metallo-endoribonuclease involved in late-stage 70S ribosome quality control and in maturation of the 3' terminus of the 16S rRNA. In Stenotrophomonas maltophilia (strain K279a), this protein is Endoribonuclease YbeY.